The sequence spans 594 residues: Proline--tRNA ligase (594 aa).

This sequence belongs to the class-II aminoacyl-tRNA synthetase family. ProS type 1 subfamily. In terms of assembly, homodimer.

It localises to the cytoplasm. It catalyses the reaction tRNA(Pro) + L-proline + ATP = L-prolyl-tRNA(Pro) + AMP + diphosphate. Functionally, catalyzes the attachment of proline to tRNA(Pro) in a two-step reaction: proline is first activated by ATP to form Pro-AMP and then transferred to the acceptor end of tRNA(Pro). As ProRS can inadvertently accommodate and process non-cognate amino acids such as alanine and cysteine, to avoid such errors it has two additional distinct editing activities against alanine. One activity is designated as 'pretransfer' editing and involves the tRNA(Pro)-independent hydrolysis of activated Ala-AMP. The other activity is designated 'posttransfer' editing and involves deacylation of mischarged Ala-tRNA(Pro). The misacylated Cys-tRNA(Pro) is not edited by ProRS. The protein is Proline--tRNA ligase of Synechococcus sp. (strain WH7803).